Reading from the N-terminus, the 495-residue chain is Membrane-bound glycerophospholipid O-acyltransferase 1 (495 aa).

6 helical membrane-spanning segments follow: residues 34-54, 70-90, 126-146, 180-200, 238-258, and 297-317; these read VNFV…RIYL, IFGI…LFVL, IYIF…MIVT, PSFL…AGPC, TGAV…FLTL, and YFAW…FSGV. Catalysis depends on residues asparagine 350 and histidine 381. 3 helical membrane-spanning segments follow: residues 371–391, 426–446, and 450–470; these read VLTF…YFTF, TWAV…MLAV, and ISLY…IILF. Residue serine 488 is modified to Phosphoserine.

It belongs to the membrane-bound acyltransferase family. In terms of tissue distribution, expressed in neutrophils.

It is found in the endoplasmic reticulum membrane. The catalysed reaction is a 1-acyl-sn-glycero-3-phospho-L-serine + an acyl-CoA = a 1,2-diacyl-sn-glycero-3-phospho-L-serine + CoA. The enzyme catalyses a 1-acyl-sn-glycero-3-phosphocholine + an acyl-CoA = a 1,2-diacyl-sn-glycero-3-phosphocholine + CoA. It catalyses the reaction a 1-acyl-sn-glycero-3-phosphoethanolamine + an acyl-CoA = a 1,2-diacyl-sn-glycero-3-phosphoethanolamine + CoA. It carries out the reaction 1-(9Z-octadecenoyl)-sn-glycero-3-phospho-L-serine + (9Z)-octadecenoyl-CoA = 1,2-di-(9Z)-octadecenoyl-sn-glycero-3-phospho-L-serine + CoA. The catalysed reaction is 1-(9Z-octadecenoyl)-sn-glycero-3-phospho-L-serine + octadecanoyl-CoA = 1-(9Z-octadecenoyl)-2-octadecanoyl-sn-glycero-3-phospho-L-serine + CoA. The enzyme catalyses 1-(9Z-octadecenoyl)-sn-glycero-3-phospho-L-serine + (9Z)-hexadecenoyl-CoA = 1-(9Z-octadecenoyl)-2-(9Z-hexadecenoyl)-sn-glycero-3-phospho-L-serine + CoA. It catalyses the reaction 1-(9Z-octadecenoyl)-sn-glycero-3-phospho-L-serine + (9Z,12Z)-octadecadienoyl-CoA = 1-(9Z-octadecenoyl)-2-(9Z,12Z-octadienoyl)-sn-glycero-3-phospho-L-serine + CoA. It carries out the reaction 1-hexadecanoyl-sn-glycero-3-phosphocholine + (9Z)-octadecenoyl-CoA = 1-hexadecanoyl-2-(9Z-octadecenoyl)-sn-glycero-3-phosphocholine + CoA. The catalysed reaction is a 1-O-(1Z-alkenyl)-sn-glycero-3-phosphoethanolamine + (9Z)-octadecenoyl-CoA = 1-O-(1Z)-alkenyl-2-(9Z)-octadecenoyl-sn-glycero-3-phosphoethanolamine + CoA. The enzyme catalyses 1-octadecanoyl-sn-glycero-3-phosphoethanolamine + (9Z)-octadecenoyl-CoA = 1-octadecanoyl-2-(9Z-octadecenoyl)-sn-glycero-3-phosphoethanolamine + CoA. It catalyses the reaction 1-(9Z-octadecenoyl)-sn-glycero-3-phosphoethanolamine + (9Z)-octadecenoyl-CoA = 1,2-di-(9Z-octadecenoyl)-sn-glycero-3-phosphoethanolamine + CoA. It carries out the reaction 1-hexadecanoyl-sn-glycero-3-phosphoethanolamine + (9Z)-octadecenoyl-CoA = 1-hexadecanoyl-2-(9Z-octadecenoyl)-sn-glycero-3-phosphoethanolamine + CoA. The catalysed reaction is 1-(10Z-heptadecenoyl)-sn-glycero-3-phosphoethanolamine + hexadecanoyl-CoA = 1-(10Z-heptadecenoyl)-2-hexadecanoyl-sn-glycero-3-phosphoethanolamine + CoA. The enzyme catalyses 1-(10Z-heptadecenoyl)-sn-glycero-3-phosphoethanolamine + (9Z)-octadecenoyl-CoA = 1-(10Z-heptadecenoyl)-2-(9Z-octadecenoyl)-sn-glycero-3-phosphoethanolamine + CoA. Its pathway is lipid metabolism; phospholipid metabolism. With respect to regulation, partially inhibited by thimerosal. Acyltransferase which catalyzes the transfer of an acyl group from an acyl-CoA towards a lysophospholipid producing a phospholipid and participates in the reacylation step of the phospholipid remodeling pathway also known as the Lands cycle. Acts on lysophosphatidylserine (1-acyl-2-hydroxy-sn-glycero-3-phospho-L-serine or LPS) and lysophosphatidylethanolamine (1-acyl-sn-glycero-3-phosphoethanolamine or LPE), and to a lesser extend lysophosphatidylcholine. Prefers oleoyl-CoA as the acyl donor and 1-oleoyl-LPE as acceptor. May play a role in neurite outgrowth during neuronal differentiation. In Homo sapiens (Human), this protein is Membrane-bound glycerophospholipid O-acyltransferase 1.